The sequence spans 29 residues: Cyclotide mobo-B (29 aa).

Residues 1–29 constitute a cross-link (cyclopeptide (Gly-Asn)); it reads GKPICGETCAKGKCYTPKCTCNWPICYKN. 3 disulfides stabilise this stretch: C5-C19, C9-C21, and C14-C26.

It belongs to the cyclotide family. This is a cyclic peptide.

Functionally, probably participates in a plant defense mechanism. The sequence is that of Cyclotide mobo-B from Melicytus obovatus (Hymenanthera obovata).